A 1304-amino-acid chain; its full sequence is Histone-lysine N-methyltransferase met-2 (1304 aa).

Residues 1–16 show a composition bias toward polar residues; it reads MDQQEPSNNVDTSSIL. Residues 1–31 are disordered; the sequence is MDQQEPSNNVDTSSILSDDGMETQEQSSFVT. Positions 97 to 129 form a coiled coil; that stretch reads NESEQEAVAAQRRVDAEKTAKDEAELKQQEEAE. In terms of domain architecture, MBD spans 834-909; it reads FHRNSPIHTP…FSFDARIDTA (76 aa). In terms of domain architecture, Pre-SET spans 971–1049; the sequence is SGCSCDGDCS…SCYNRVVQNN (79 aa). Residues C973, C975, C979, C985, C987, C1030, C1034, C1036, and C1041 each coordinate Zn(2+). The SET domain maps to 1052-1277; that stretch reads YPMHIFKTAQ…AGDELTWDYQ (226 aa). S-adenosyl-L-methionine-binding positions include 1062-1064, D1098, and Y1100; that span reads SGW. A compositionally biased stretch (basic and acidic residues) spans 1113–1122; the sequence is EKGREDHETD. The segment at 1113 to 1201 is disordered; that stretch reads EKGREDHETD…DSMEKDNIES (89 aa). The segment covering 1128–1144 has biased composition (acidic residues); it reads DESDYDDEEGSDGDSGD. The segment covering 1152 to 1165 has biased composition (basic and acidic residues); the sequence is KRQDSSESGEETKR. Basic residues predominate over residues 1166–1178; that stretch reads LTRQKRKQSKKSG. Residues 1182 to 1201 show a composition bias toward basic and acidic residues; it reads SVEKDDTTPRDSMEKDNIES. Residues R1231 and 1234 to 1235 contribute to the S-adenosyl-L-methionine site; that span reads NH. Residues C1237, C1290, C1292, and C1297 each contribute to the Zn(2+) site. A Post-SET domain is found at 1286 to 1302; sequence TQLTCHCGAENCTGRLL.

It belongs to the class V-like SAM-binding methyltransferase superfamily.

The protein resides in the nucleus. Its subcellular location is the chromosome. It is found in the cytoplasm. The enzyme catalyses N(6)-methyl-L-lysyl(9)-[histone H3] + S-adenosyl-L-methionine = N(6),N(6)-dimethyl-L-lysyl(9)-[histone H3] + S-adenosyl-L-homocysteine + H(+). It carries out the reaction L-lysyl(9)-[histone H3] + S-adenosyl-L-methionine = N(6)-methyl-L-lysyl(9)-[histone H3] + S-adenosyl-L-homocysteine + H(+). Functionally, histone methyltransferase which is required for the mono- and dimethylation of 'Lys-9' of histone H3. This increases the efficiency of set-25-mediated trimethylation of histone H3 'Lys-9'. Involved in the transcriptional repression of lin-3 which is required for the negative regulation of vulval cell fate specification during postembryonic development. Has a role in blocking checkpoint signaling and mediating the transcriptional silencing of meiotic sex chromosome inactivation; a mechanism which enables checkpoint proteins to distinguish between the partnerless male X chromosome and asynapsed chromosomes thereby shielding the lone X from inappropriate activation of an apoptotic program. Operates redundantly with set-25 to position chromatin at the nuclear periphery. Required for small-RNA-induced H3K9 methylation. Together with set-25, protects and stabilizes repeat-rich genomic regions by suppressing transcription-induced replication stress through methylation of H3K9. Together with spr-5, required for transgenerational fertility. This is Histone-lysine N-methyltransferase met-2 (met-2) from Caenorhabditis elegans.